The following is a 304-amino-acid chain: Glutaminase (304 aa).

The substrate site is built by serine 63, asparagine 114, glutamate 158, asparagine 165, tyrosine 189, tyrosine 240, and valine 258.

It belongs to the glutaminase family. Homotetramer.

It carries out the reaction L-glutamine + H2O = L-glutamate + NH4(+). The polypeptide is Glutaminase (Shewanella baltica (strain OS185)).